A 128-amino-acid chain; its full sequence is Large ribosomal subunit protein uL24 (128 aa).

Positions 105–128 (KAKSRQVGKEKGKYKEETIEKMQE) are disordered.

Belongs to the universal ribosomal protein uL24 family. In terms of assembly, component of the large ribosomal subunit.

The protein resides in the cytoplasm. Its function is as follows. Component of the large ribosomal subunit. The ribosome is a large ribonucleoprotein complex responsible for the synthesis of proteins in the cell. This chain is Large ribosomal subunit protein uL24 (RPL26), found in Gallus gallus (Chicken).